The following is a 428-amino-acid chain: Spliceosome RNA helicase DDX39B (428 aa).

Over residues 1 to 19 (MAENDVDNELLDYEDDEVE) the composition is skewed to acidic residues. Positions 1 to 31 (MAENDVDNELLDYEDDEVETAAGGDGAEAPA) are disordered. Alanine 2 is modified (N-acetylalanine). At lysine 36 the chain carries N6-acetyllysine; alternate. Lysine 36 participates in a covalent cross-link: Glycyl lysine isopeptide (Lys-Gly) (interchain with G-Cter in SUMO2); alternate. Serine 38 and serine 41 each carry phosphoserine. Residues 45-73 (SGFRDFLLKPELLRAIVDCGFEHPSEVQH) carry the Q motif motif. The Helicase ATP-binding domain occupies 76-249 (IPQAILGMDV…RKFMQDPMEI (174 aa)). 89 to 96 (AKSGMGKT) is a binding site for ATP. A Phosphothreonine modification is found at threonine 172. The short motif at 196 to 199 (DECD) is the DECD box element. The Helicase C-terminal domain maps to 261–422 (GLQQYYVKLK…ELPDEIDISS (162 aa)).

Belongs to the DEAD box helicase family. DECD subfamily. Homodimer, and heterodimer with DDX39A. DDX39B interacts with the THO subcomplex to form the THO-DDX39B complex which multimerizes into a 28-subunit tetrameric assembly. Component of the transcription/export (TREX) complex at least composed of ALYREF/THOC4, DDX39B, SARNP/CIP29, CHTOP and the THO subcomplex; in the complex interacts with THOC2. THOC1-THOC2-THOC3-DDX39B subcomplex is sufficient for the interaction with export factor NXF1-NXT1. TREX seems to have a dynamic structure involving ATP-dependent remodeling. Within the TREX complex bridges ALYREF/THOC4 and the THO subcomplex, and, in a ATP-dependent manner, ALYREF/THOC4 and SARNP/CIP29. Component of the spliceosome. Interacts directly with U2AF2. Interacts with RBM8A, RNPS1 and SRRM1, FYTTD1/UIF, THOC1, MX1 and POLDIP3. Interacts with LUZP4. Interacts with SARNP/CIP29 (via the C-terminal domain); the interaction is direct and facilitates RNA binding of DDX39B. In terms of assembly, (Microbial infection) Interacts with human cytomegalovirus/HHV-5 protein UL69.

The protein resides in the nucleus. It localises to the nucleus speckle. Its subcellular location is the cytoplasm. The enzyme catalyses ATP + H2O = ADP + phosphate + H(+). Functionally, involved in nuclear export of spliced and unspliced mRNA. Component of the TREX complex which is thought to couple mRNA transcription, processing and nuclear export, and specifically associates with spliced mRNA and not with unspliced pre-mRNA. The TREX complex is recruited to spliced mRNAs by a transcription-independent mechanism, binds to mRNA upstream of the exon-junction complex (EJC) and is recruited in a splicing- and cap-dependent manner to a region near the 5' end of the mRNA where it functions in mRNA export to the cytoplasm via the TAP/NXF1 pathway. The THOC1-THOC2-THOC3 core complex alone is sufficient to promote ATPase activity of DDX39B; in the complex THOC2 is the only component that directly interacts with DDX39B. Associates with SARNP/CIP29, which facilitates RNA binding of DDX39B and likely plays a role in mRNA export. May undergo several rounds of ATP hydrolysis during assembly of TREX to drive subsequent loading of components such as ALYREF/THOC4 and CHTOP onto mRNA. Also associates with pre-mRNA independent of ALYREF/THOC4. Involved in the nuclear export of intronless mRNA; the ATP-bound form is proposed to recruit export adapter ALYREF/THOC4 to intronless mRNA; its ATPase activity is cooperatively stimulated by RNA and ALYREF/THOC4 and ATP hydrolysis is thought to trigger the dissociation from RNA to allow the association of ALYREF/THOC4 and the NXF1-NXT1 heterodimer. Involved in transcription elongation and genome stability. Splice factor that is required for the first ATP-dependent step in spliceosome assembly and for the interaction of U2 snRNP with the branchpoint. Has both RNA-stimulated ATP binding/hydrolysis activity and ATP-dependent RNA unwinding activity. Even with the stimulation of RNA, the ATPase activity is weak. Can only hydrolyze ATP but not other NTPs. The RNA stimulation of ATPase activity does not have a strong preference for the sequence and length of the RNA. However, ssRNA stimulates the ATPase activity much more strongly than dsRNA. Can unwind 5' or 3' overhangs or blunt end RNA duplexes in vitro. The ATPase and helicase activities are not influenced by U2AF2; the effect of ALYREF/THOC4 is reported conflictingly with [PubMed:23299939] reporting a stimulatory effect. Its function is as follows. (Microbial infection) The TREX complex is essential for the export of Kaposi's sarcoma-associated herpesvirus (KSHV) intronless mRNAs and infectious virus production. The chain is Spliceosome RNA helicase DDX39B from Homo sapiens (Human).